A 434-amino-acid chain; its full sequence is Rubisco accumulation factor 1.1, chloroplastic (434 aa).

The transit peptide at 1 to 51 directs the protein to the chloroplast; the sequence is MLSLTATTLSSSIFTQSKTHGFFNTRPVYRKPFTTITSALIPASNRQAPPK. Positions 65 to 254 are N-terminal alpha-helix; that stretch reads IPPKFRSLDT…KAKKAVLREL (190 aa). The segment at 273 to 419 is C-terminal beta sheet; it reads VPVVRLRFGE…GMVVLVVRPP (147 aa).

This sequence belongs to the RAF family. As to quaternary structure, homodimer.

The protein localises to the plastid. It localises to the chloroplast. In terms of biological role, required for assembly or stability of RuBisCO. Acts at a postchaperonin step to fold and/or assemble the large subunit (rbcL) into RuBisCO. RAF1 binds first to a rbcL dimer (rbcL(2)), leading to a rbcL(8)-RAF1(4) complex formation. In the next step, RBCS displaces RAF1, thus resulting in holoenzyme formation. In Arabidopsis thaliana (Mouse-ear cress), this protein is Rubisco accumulation factor 1.1, chloroplastic.